Consider the following 553-residue polypeptide: Transmembrane protein DDB_G0292058 (553 aa).

A signal peptide spans 1-26; sequence MIKINKILSLLIILLIINCNYQFVKA. Helical transmembrane passes span 80 to 100 and 137 to 157; these read ILLS…GIIF and VFIL…VFIT. N-linked (GlcNAc...) asparagine glycans are attached at residues N162, N171, N178, and N195. Transmembrane regions (helical) follow at residues 243–263 and 274–294; these read IIIV…VSAL and SIAL…HYPI. N-linked (GlcNAc...) asparagine glycans are attached at residues N315, N332, N351, N396, N405, and N462. The helical transmembrane segment at 515–535 threads the bilayer; that stretch reads LLIAPTAVFAILLTGLGITGI.

It is found in the membrane. The chain is Transmembrane protein DDB_G0292058 from Dictyostelium discoideum (Social amoeba).